Here is a 191-residue protein sequence, read N- to C-terminus: Probable DNA-directed RNA polymerase subunit delta (191 aa).

Positions 14–83 (LSMIEVARAI…GENKWGLRSW (70 aa)) constitute an HTH HARE-type domain. Residues 118–191 (DEDAIDYRDD…EDEEDEEPVL (74 aa)) are disordered.

This sequence belongs to the RpoE family. In terms of assembly, RNAP is composed of a core of 2 alpha, a beta and a beta' subunits. The core is associated with a delta subunit and one of several sigma factors.

In terms of biological role, participates in both the initiation and recycling phases of transcription. In the presence of the delta subunit, RNAP displays an increased specificity of transcription, a decreased affinity for nucleic acids, and an increased efficiency of RNA synthesis because of enhanced recycling. The polypeptide is Probable DNA-directed RNA polymerase subunit delta (Streptococcus pyogenes serotype M18 (strain MGAS8232)).